Consider the following 403-residue polypeptide: Large ribosomal subunit protein uL3 (403 aa).

Residues 1–37 are disordered; that stretch reads MSHRKFSAPRHGSLGFLPRKRSSRHRGKVKSFPKDDP. A Phosphoserine modification is found at S13. The segment covering 18–31 has biased composition (basic residues); it reads PRKRSSRHRGKVKS. Residue K39 forms a Glycyl lysine isopeptide (Lys-Gly) (interchain with G-Cter in SUMO2) linkage. Position 136 is an N6-acetyllysine (K136). Glycyl lysine isopeptide (Lys-Gly) (interchain with G-Cter in SUMO2) cross-links involve residues K224 and K226. H245 bears the Tele-methylhistidine mark. An N6-acetyllysine; alternate mark is found at K286 and K294. Residue K286 forms a Glycyl lysine isopeptide (Lys-Gly) (interchain with G-Cter in SUMO2); alternate linkage. Residue K294 forms a Glycyl lysine isopeptide (Lys-Gly) (interchain with G-Cter in SUMO1); alternate linkage. S304 carries the phosphoserine modification. K366 bears the N6-acetyllysine; alternate mark. K366 is covalently cross-linked (Glycyl lysine isopeptide (Lys-Gly) (interchain with G-Cter in SUMO2); alternate). An N6-acetyllysine modification is found at K373. Residues K386, K393, and K399 each participate in a glycyl lysine isopeptide (Lys-Gly) (interchain with G-Cter in SUMO2) cross-link.

Belongs to the universal ribosomal protein uL3 family. In terms of assembly, component of the large ribosomal subunit. Interacts with DHX33. Post-translationally, constitutively monomethylated at His-245 by METTL18. Methylation at His-245 regulates translation elongation by slowing ribosome traversal on tyrosine codons: slower elongation provides enough time for proper folding of synthesized proteins and prevents cellular aggregation of tyrosine-rich proteins. It is not required for incorporation of RPL3 into ribosomes.

It is found in the nucleus. The protein resides in the nucleolus. The protein localises to the cytoplasm. Its function is as follows. Component of the large ribosomal subunit. The ribosome is a large ribonucleoprotein complex responsible for the synthesis of proteins in the cell. The chain is Large ribosomal subunit protein uL3 (RPL3) from Oryctolagus cuniculus (Rabbit).